A 520-amino-acid chain; its full sequence is Chaperone Ric-8B (520 aa).

Serine 468 is subject to Phosphoserine. Residue threonine 473 is modified to Phosphothreonine.

It belongs to the synembryn family. In terms of assembly, interacts with GDP-bound G(s) G-alpha proteins GNAL and GNAS. Does not interact with G-alpha proteins when they are in complex with subunits beta and gamma.

The protein localises to the cytoplasm. The protein resides in the cell cortex. Functionally, chaperone that specifically binds and folds nascent G(s) G-alpha proteins (GNAS and GNAL) prior to G protein heterotrimer formation, promoting their association with the plasma membrane. Also acts as a guanine nucleotide exchange factor (GEF) for G(s) proteins by stimulating exchange of bound GDP for free GTP. Acts as an important component for odorant signal transduction by mediating GNAL (G(olf)-alpha) folding, thereby promoting-dependent cAMP accumulation in olfactory sensory neurons. This is Chaperone Ric-8B (Ric8b) from Rattus norvegicus (Rat).